Here is a 338-residue protein sequence, read N- to C-terminus: Popeye domain-containing protein 1-A (338 aa).

At 1–40 (MTTESIFITTLPMDFNSQFDNITIGLNDNETLCENWREIH) the chain is on the extracellular side. 2 N-linked (GlcNAc...) asparagine glycosylation sites follow: Asn-21 and Asn-29. The helical transmembrane segment at 41 to 61 (HLVFHLANTCFAAGLVIPSTL) threads the bilayer. The Cytoplasmic segment spans residues 62–65 (NLHM). A helical transmembrane segment spans residues 66 to 86 (LFLRGMLCLGCTFFIIWAVLF). Residues 87–91 (RCALD) are Extracellular-facing. The helical transmembrane segment at 92-112 (IMIWNATFLSINFMHFVYLVY) threads the bilayer. Over 113–338 (KKRPIKIKKE…VGPLSHAVFC (226 aa)) the chain is Cytoplasmic. Positions 296 to 317 (TNDNEDGLQNFLRGTSTTSSQR) are disordered. Positions 307 to 317 (LRGTSTTSSQR) are enriched in polar residues.

The protein belongs to the popeye family. In terms of tissue distribution, expressed in the heart.

It is found in the lateral cell membrane. Its subcellular location is the cell junction. The protein localises to the tight junction. It localises to the membrane. Cell adhesion molecule involved in the establishment and/or maintenance of cell integrity. Plays a role in vamp3-mediated vesicular transport and recycling of different receptor molecules. May be involved in the formation and regulation of the tight junction (TJ) paracellular permeability barrier in epithelial cells. May induce primordial adhesive contact and aggregation of epithelial cells in a Ca(2+)-independent manner. May be involved in epithelial movement during corneal sheet formation and regeneration. May play a role in the regulation of cell shape and movement by modulating the Rho-GTPase activity. May also be involved in striated muscle regeneration and in the regulation of cell spreading. The chain is Popeye domain-containing protein 1-A (popdc1-a) from Xenopus laevis (African clawed frog).